Here is a 198-residue protein sequence, read N- to C-terminus: Recombination protein RecR (198 aa).

Residues 58–73 (CSVCGNFTDKDPCAIC) form a C4-type zinc finger. A Toprim domain is found at 81 to 175 (NTICVVEHPK…KVTRIAHGIP (95 aa)).

This sequence belongs to the RecR family.

May play a role in DNA repair. It seems to be involved in an RecBC-independent recombinational process of DNA repair. It may act with RecF and RecO. The protein is Recombination protein RecR of Clostridium tetani (strain Massachusetts / E88).